The primary structure comprises 756 residues: Xylosyl- and glucuronyltransferase LARGE1 (756 aa).

Residues 1–10 (MLGICRGRRK) lie on the Cytoplasmic side of the membrane. The chain crosses the membrane as a helical; Signal-anchor for type II membrane protein span at residues 11–31 (FLAASLTLLCIPAITWIYLFA). The Lumenal portion of the chain corresponds to 32 to 756 (GSFEDGKPVS…LKYLTAENNS (725 aa)). 2 disordered regions span residues 43–64 (SPLESQAHSPRYTASSQRERES) and 82–108 (QLSLAQGQSPAHHRGNHSKTYSMEEGT). Polar residues predominate over residues 44–58 (PLESQAHSPRYTASS). The stretch at 53 to 95 (RYTASSQRERESLEVRVREVEEENRALRRQLSLAQGQSPAHHR) forms a coiled coil. N-linked (GlcNAc...) asparagine glycans are attached at residues Asn97, Asn122, and Asn148. The interval 138–413 (IHVAIVCAGY…FLEYDGNLLR (276 aa)) is xylosyltransferase activity. 2 residues coordinate Mn(2+): Asp242 and Asp244. An N-linked (GlcNAc...) asparagine glycan is attached at Asn272. The interval 414 to 756 (RELFGCPSET…LKYLTAENNS (343 aa)) is glucuronyltransferase activity. Residues Asp563 and Asp565 each contribute to the Mn(2+) site.

This sequence in the C-terminal section; belongs to the glycosyltransferase 49 family. In the N-terminal section; belongs to the glycosyltransferase 8 family. Interacts with DAG1 (via the N-terminal domain of alpha-DAG1); the interaction increases binding of DAG1 to laminin. Interacts with B4GAT1. It depends on Mn(2+) as a cofactor. As to expression, ubiquitous. Highest expression in heart, diaphragm and brain, where it is especially found in cerebral cortex, hippocampus, and trigeminal ganglion.

The protein resides in the golgi apparatus membrane. It carries out the reaction 3-O-[beta-D-GlcA-(1-&gt;3)-beta-D-Xyl-(1-&gt;4)-Rib-ol-P-Rib-ol-P-3-beta-D-GalNAc-(1-&gt;3)-beta-D-GlcNAc-(1-&gt;4)-(O-6-P-alpha-D-Man)]-Thr-[protein] + UDP-alpha-D-xylose = 3-O-[alpha-D-Xyl-(1-&gt;3)-beta-D-GlcA-(1-&gt;4)-beta-D-Xyl-(1-&gt;4)-Rib-ol-P-Rib-ol-P-3-beta-D-GalNAc-(1-&gt;3)-beta-D-GlcNAc-(1-&gt;4)-(O-6-P-alpha-D-Man)]-Thr-[protein] + UDP + H(+). The enzyme catalyses 3-O-{(1-&gt;[3)-alpha-D-Xyl-(1-&gt;3)-beta-D-GlcA-(1-&gt;](n)-4)-beta-D-Xyl-(1-&gt;4)-Rib-ol-P-Rib-ol-P-3-beta-D-GalNAc-(1-&gt;3)-beta-D-GlcNAc-(1-&gt;4)-O-6-P-alpha-D-Man}-L-Thr-[protein] + UDP-alpha-D-glucuronate = 3-O-{beta-D-GlcA-(1-&gt;[3)-alpha-D-Xyl-(1-&gt;3)-beta-D-GlcA-(1-&gt;](n)-4)-beta-D-Xyl-(1-&gt;4)-Rib-ol-P-Rib-ol-P-3-beta-D-GalNAc-(1-&gt;3)-beta-D-GlcNAc-(1-&gt;4)-O-6-P-alpha-D-Man}-L-Thr-[protein] + UDP + H(+). The catalysed reaction is 3-O-{beta-D-GlcA-(1-&gt;[3)-alpha-D-Xyl-(1-&gt;3)-beta-D-GlcA-(1-&gt;](n)-4)-beta-D-Xyl-(1-&gt;4)-Rib-ol-P-Rib-ol-P-3-beta-D-GalNAc-(1-&gt;3)-beta-D-GlcNAc-(1-&gt;4)-O-6-P-alpha-D-Man}-L-Thr-[protein] + UDP-alpha-D-xylose = 3-O-{(1-&gt;[3)-alpha-D-Xyl-(1-&gt;3)-beta-D-GlcA-(1-&gt;](n+1)-4)-beta-D-Xyl-(1-&gt;4)-Rib-ol-P-Rib-ol-P-3-beta-D-GalNAc-(1-&gt;3)-beta-D-GlcNAc-(1-&gt;4)-O-6-P-alpha-D-Man}-L-Thr-[protein] + UDP + H(+). It participates in protein modification; protein glycosylation. In terms of biological role, bifunctional glycosyltransferase with both alpha-1,3-xylosyltransferase and beta-1,3-glucuronyltransferase activities involved in the maturation of alpha-dystroglycan (DAG1) by glycosylation leading to DAG1 binding to laminin G-like domain-containing extracellular proteins with high affinity. Elongates the glucuronyl-beta-1,4-xylose-beta disaccharide primer structure initiated by B4GAT1 by adding repeating units [-3-Xylose-alpha-1,3-GlcA-beta-1-] to produce a heteropolysaccharide. Requires the phosphorylation of core M3 (O-mannosyl trisaccharide) by POMK to elongate the glucuronyl-beta-1,4-xylose-beta disaccharide primer. Plays a key role in skeletal muscle function and regeneration. The sequence is that of Xylosyl- and glucuronyltransferase LARGE1 from Mus musculus (Mouse).